Here is a 317-residue protein sequence, read N- to C-terminus: NAD kinase (317 aa).

The Proton acceptor role is filled by Asp82. NAD(+)-binding positions include 82–83, Arg87, 157–158, Asp187, and 198–203; these read DG, NE, and TAYAFS.

Belongs to the NAD kinase family. The cofactor is a divalent metal cation.

It is found in the cytoplasm. It catalyses the reaction NAD(+) + ATP = ADP + NADP(+) + H(+). Functionally, involved in the regulation of the intracellular balance of NAD and NADP, and is a key enzyme in the biosynthesis of NADP. Catalyzes specifically the phosphorylation on 2'-hydroxyl of the adenosine moiety of NAD to yield NADP. In Corynebacterium diphtheriae (strain ATCC 700971 / NCTC 13129 / Biotype gravis), this protein is NAD kinase.